The sequence spans 282 residues: Bis(5'-nucleosyl)-tetraphosphatase, symmetrical (282 aa).

This sequence belongs to the Ap4A hydrolase family.

It carries out the reaction P(1),P(4)-bis(5'-adenosyl) tetraphosphate + H2O = 2 ADP + 2 H(+). Functionally, hydrolyzes diadenosine 5',5'''-P1,P4-tetraphosphate to yield ADP. In Escherichia coli O7:K1 (strain IAI39 / ExPEC), this protein is Bis(5'-nucleosyl)-tetraphosphatase, symmetrical.